A 525-amino-acid polypeptide reads, in one-letter code: uncharacterized protein (525 aa).

An N-terminal signal peptide occupies residues 1-21 (MLECLSALLVLFAGGGGSVLA). Residues 22 to 448 (AVQSKTVADP…ISAASQLDKR (427 aa)) lie on the Extracellular side of the membrane. Residues 242 to 264 (KVSSENCSKDTDDKSGSKKERNT) are disordered. Residues 449-469 (IFIFTAITVSITTLMMLGFSY) traverse the membrane as a helical segment. The Cytoplasmic portion of the chain corresponds to 470 to 525 (RSRVSFRDHSIDDSDDDNDWSDDEVEFDEEYFYSLPVSIPEKGISLDKMAQQLGVE).

It is found in the membrane. This is an uncharacterized protein from Saccharomyces cerevisiae (strain YJM789) (Baker's yeast).